Here is a 1001-residue protein sequence, read N- to C-terminus: MPSQVMDQRHHMSQYSHPTLAASSFSEELRLPTERQVGFWKQESLPHHMGSKSVASSPIEKPQPIGTRMAGRLELLQPYKLRDQGAAFSLEHKLFGQERHANLPPSPWRPDQETGRQTDSSLKSAALFSDGRINPNGAYNENGLFSSSVSDIFDKKLRLTSKNGLVGQSIEKVDLNHVDDEPFELTEEIEAQIIGNLLPDDDDLLSGVVDEVGYPTNANNRDDADDDIFYTGGGMELETDENKKLQEFNGSANDGIGLLNGVLNGEHLYREQPSRTLFVRNINSNVEDSELKLLFEHFGDIRALYTACKHRGFVMISYYDIRSALNAKMELQNKALRRRKLDIHYSIPKDNPSEKDINQGTIVLFNVDLSLTNDDLHKIFGDYGEIKEIRDTPQKGHHKIIEFYDVRAAEAALRALNRNDIAGKKIKLETSRLGAARRLSQHMSSELCQEEFGVCKLGSPSTSSPPIASFGSTNLATITSTGHENGSIQGMHSGLQTSISQFRETSFPGLSSTIPQSLSTPIGISSGATHSNQAALGEISQSLGRMNGHMNYSFQGMSALHPHSLPEVHNGVNNGVPYNLNSMAQVVNGTNSRTAEAVDNRHLHKVGSGNLNGHSFDRAEGALGFSRSGSSSVRGHQLMWNNSSNFHHHPNSPVLWPSPGSFVNNVPSRSPAQMHGVPRAPSSHMIDNVLPMHHLHVGSAPAINPSLWDRRHGYAGELTEAPNFHPGSVGSMGFPGSPQLHSMELNNIYPQTGGNCMDPTVSPAQIGGPSPQQRGSMFHGRNPMVPLPSFDSPGERMRSRRNDSNGNQSDNKKQYELDVDRIVRGDDSRTTLMIKNIPNKYTSKMLLAAIDENHKGTYDFIYLPIDFKNKCNVGYAFINMTNPQHIIPFYQTFNGKKWEKFNSEKVASLAYARIQGKSALIAHFQNSSLMNEDKRCRPILFHSDGPNAGDQEPFPMGTNIRARSGRSRASSGEESHQDISITSVNCDTSTNGVDTTGPAKD.

The segment at 100 to 120 is disordered; the sequence is HANLPPSPWRPDQETGRQTDS. 2 RRM domains span residues 275-348 and 360-433; these read RTLF…YSIP and GTIV…TSRL. Disordered stretches follow at residues 767-815 and 941-1001; these read GGPS…KKQY and FHSD…PAKD. A compositionally biased stretch (basic and acidic residues) spans 793 to 803; sequence PGERMRSRRND. Residues 978–994 show a composition bias toward polar residues; that stretch reads DISITSVNCDTSTNGVD.

Functionally, probable RNA-binding protein that may play a role in growth regulation. This is Protein MEI2-like 4 (ML4) from Oryza sativa subsp. japonica (Rice).